Here is a 367-residue protein sequence, read N- to C-terminus: Nociceptin receptor (367 aa).

Residues 1–45 (MESLFPAPFWEVLYGSHFQGNLSLLNETVPHHLLLNASHSAFLPL) lie on the Extracellular side of the membrane. 3 N-linked (GlcNAc...) asparagine glycosylation sites follow: Asn21, Asn26, and Asn36. The helical transmembrane segment at 46–71 (GLKVTIVGLYLAVCIGGLLGNCLVMY) threads the bilayer. Residues 72 to 84 (VILRHTKMKTATN) lie on the Cytoplasmic side of the membrane. A helical membrane pass occupies residues 85–106 (IYIFNLALADTLVLLTLPFQGT). The Extracellular portion of the chain corresponds to 107–121 (DILLGFWPFGNALCK). The cysteines at positions 120 and 197 are disulfide-linked. A helical membrane pass occupies residues 122-143 (TVIAIDYYNMFTSTFTLTAMSV). Over 144 to 162 (DRYVAICHPIRALDVRTSS) the chain is Cytoplasmic. Residues 163–185 (KAQAVNVAIWALASVVGVPVAIM) traverse the membrane as a helical segment. At 186 to 208 (GSAQVEDEEIECLVEIPAPQDYW) the chain is on the extracellular side. The helical transmembrane segment at 209–233 (GPVFAICIFLFSFIIPVLIISVCYS) threads the bilayer. Topologically, residues 234 to 261 (LMIRRLRGVRLLSGSREKDRNLRRITRL) are cytoplasmic. Residues 262-282 (VLVVVAVFVGCWTPVQVFVLV) traverse the membrane as a helical segment. Over 283-297 (QGLGVQPGSETAVAI) the chain is Extracellular. Residues 298–319 (LRFCTALGYVNSCLNPILYAFL) traverse the membrane as a helical segment. The Cytoplasmic portion of the chain corresponds to 320–367 (DENFKACFRKFCCASALHREMQVSDRVRSIAKDVGLGCKTSETVPRPA). Cys331 is lipidated: S-palmitoyl cysteine.

Belongs to the G-protein coupled receptor 1 family. In terms of processing, phosphorylation at Ser-360 requires GRK3. As to expression, in the brain, isoform KOR3 and isoform KOR3C are most abundant in hypothalamus and periaqueductal gray. Isoform KOR3A is highly expressed in cortex, striatum and brainstem. Isoform KOR3D is highly expressed in cerebellum, hypothalamus and brainstem. Detected in spleen lymphocytes.

The protein localises to the cell membrane. Its subcellular location is the cytoplasmic vesicle. Functionally, G-protein coupled opioid receptor that functions as a receptor for the endogenous neuropeptide nociceptin. Ligand binding causes a conformation change that triggers signaling via guanine nucleotide-binding proteins (G proteins) and modulates the activity of down-stream effectors. Signaling via G proteins mediates inhibition of adenylate cyclase activity and calcium channel activity. Arrestins modulate signaling via G proteins and mediate the activation of alternative signaling pathways that lead to the activation of MAP kinases. Plays a role in modulating nociception and the perception of pain. Plays a role in the regulation of locomotor activity by the neuropeptide nociceptin. The polypeptide is Nociceptin receptor (Oprl1) (Mus musculus (Mouse)).